The primary structure comprises 349 residues: Phosphoribosylformylglycinamidine cyclo-ligase (349 aa).

The protein belongs to the AIR synthase family.

It localises to the cytoplasm. The enzyme catalyses 2-formamido-N(1)-(5-O-phospho-beta-D-ribosyl)acetamidine + ATP = 5-amino-1-(5-phospho-beta-D-ribosyl)imidazole + ADP + phosphate + H(+). It functions in the pathway purine metabolism; IMP biosynthesis via de novo pathway; 5-amino-1-(5-phospho-D-ribosyl)imidazole from N(2)-formyl-N(1)-(5-phospho-D-ribosyl)glycinamide: step 2/2. In Trichlorobacter lovleyi (strain ATCC BAA-1151 / DSM 17278 / SZ) (Geobacter lovleyi), this protein is Phosphoribosylformylglycinamidine cyclo-ligase.